Here is a 341-residue protein sequence, read N- to C-terminus: Flap endonuclease 1 (341 aa).

Residues 1-98 (MGVQIGELIP…RELEKRREAR (98 aa)) are N-domain. Positions 27, 80, 152, 154, 173, 175, and 236 each coordinate Mg(2+). Positions 116-258 (EAKKYAMRAT…KALTIVKRTK (143 aa)) are I-domain. Positions 330–338 (KQSTLESWF) are interaction with PCNA.

The protein belongs to the XPG/RAD2 endonuclease family. FEN1 subfamily. As to quaternary structure, interacts with PCNA. PCNA stimulates the nuclease activity without altering cleavage specificity. Mg(2+) serves as cofactor.

Structure-specific nuclease with 5'-flap endonuclease and 5'-3' exonuclease activities involved in DNA replication and repair. During DNA replication, cleaves the 5'-overhanging flap structure that is generated by displacement synthesis when DNA polymerase encounters the 5'-end of a downstream Okazaki fragment. Binds the unpaired 3'-DNA end and kinks the DNA to facilitate 5' cleavage specificity. Cleaves one nucleotide into the double-stranded DNA from the junction in flap DNA, leaving a nick for ligation. Also involved in the base excision repair (BER) pathway. Acts as a genome stabilization factor that prevents flaps from equilibrating into structures that lead to duplications and deletions. Also possesses 5'-3' exonuclease activity on nicked or gapped double-stranded DNA. The protein is Flap endonuclease 1 of Thermococcus onnurineus (strain NA1).